We begin with the raw amino-acid sequence, 246 residues long: 1-(5-phosphoribosyl)-5-[(5-phosphoribosylamino)methylideneamino] imidazole-4-carboxamide isomerase (246 aa).

Aspartate 10 acts as the Proton acceptor in catalysis. Aspartate 131 functions as the Proton donor in the catalytic mechanism.

This sequence belongs to the HisA/HisF family.

Its subcellular location is the cytoplasm. It carries out the reaction 1-(5-phospho-beta-D-ribosyl)-5-[(5-phospho-beta-D-ribosylamino)methylideneamino]imidazole-4-carboxamide = 5-[(5-phospho-1-deoxy-D-ribulos-1-ylimino)methylamino]-1-(5-phospho-beta-D-ribosyl)imidazole-4-carboxamide. It participates in amino-acid biosynthesis; L-histidine biosynthesis; L-histidine from 5-phospho-alpha-D-ribose 1-diphosphate: step 4/9. This chain is 1-(5-phosphoribosyl)-5-[(5-phosphoribosylamino)methylideneamino] imidazole-4-carboxamide isomerase, found in Acidiphilium cryptum (strain JF-5).